Consider the following 185-residue polypeptide: GTP-dependent dephospho-CoA kinase (185 aa).

Residues Asp-50, Val-52, Asp-73, Lys-75, and Glu-128 each contribute to the GTP site.

Belongs to the GTP-dependent DPCK family.

The enzyme catalyses 3'-dephospho-CoA + GTP = GDP + CoA + H(+). Its pathway is cofactor biosynthesis; coenzyme A biosynthesis. Functionally, catalyzes the GTP-dependent phosphorylation of the 3'-hydroxyl group of dephosphocoenzyme A to form coenzyme A (CoA). This chain is GTP-dependent dephospho-CoA kinase, found in Aeropyrum pernix (strain ATCC 700893 / DSM 11879 / JCM 9820 / NBRC 100138 / K1).